The primary structure comprises 399 residues: Protein translocase subunit SecD (399 aa).

6 helical membrane-spanning segments follow: residues 7-27, 239-259, 262-282, 286-306, 329-351, and 357-381; these read IKTA…LTFP, VIGA…LGLV, IALL…NATL, GVAG…LIFA, ALRA…FYFG, and GFAV…RTLL.

It belongs to the SecD/SecF family. SecD subfamily. As to quaternary structure, forms a complex with SecF. Part of the essential Sec protein translocation apparatus which comprises SecA, SecYEG and auxiliary proteins SecDF. Other proteins may also be involved.

The protein localises to the cell inner membrane. In terms of biological role, part of the Sec protein translocase complex. Interacts with the SecYEG preprotein conducting channel. SecDF uses the proton motive force (PMF) to complete protein translocation after the ATP-dependent function of SecA. The sequence is that of Protein translocase subunit SecD from Dictyoglomus turgidum (strain DSM 6724 / Z-1310).